Consider the following 204-residue polypeptide: tRNA (pseudouridine(54)-N(1))-methyltransferase (204 aa).

S-adenosyl-L-methionine contacts are provided by Leu-136 and Gly-158.

The protein belongs to the methyltransferase superfamily. TrmY family. Homodimer.

It is found in the cytoplasm. It carries out the reaction pseudouridine(54) in tRNA + S-adenosyl-L-methionine = N(1)-methylpseudouridine(54) in tRNA + S-adenosyl-L-homocysteine + H(+). Functionally, specifically catalyzes the N1-methylation of pseudouridine at position 54 (Psi54) in tRNAs. The sequence is that of tRNA (pseudouridine(54)-N(1))-methyltransferase from Pyrococcus abyssi (strain GE5 / Orsay).